The following is a 71-amino-acid chain: UPF0346 protein Sez_1447 (71 aa).

Belongs to the UPF0346 family.

The protein is UPF0346 protein Sez_1447 of Streptococcus equi subsp. zooepidemicus (strain MGCS10565).